The following is a 509-amino-acid chain: ATP synthase subunit alpha (509 aa).

Residue 169 to 176 (GDRQTGKT) coordinates ATP.

Belongs to the ATPase alpha/beta chains family. As to quaternary structure, F-type ATPases have 2 components, CF(1) - the catalytic core - and CF(0) - the membrane proton channel. CF(1) has five subunits: alpha(3), beta(3), gamma(1), delta(1), epsilon(1). CF(0) has three main subunits: a(1), b(2) and c(9-12). The alpha and beta chains form an alternating ring which encloses part of the gamma chain. CF(1) is attached to CF(0) by a central stalk formed by the gamma and epsilon chains, while a peripheral stalk is formed by the delta and b chains.

Its subcellular location is the cell inner membrane. The enzyme catalyses ATP + H2O + 4 H(+)(in) = ADP + phosphate + 5 H(+)(out). Its function is as follows. Produces ATP from ADP in the presence of a proton gradient across the membrane. The alpha chain is a regulatory subunit. This Xanthobacter autotrophicus (strain ATCC BAA-1158 / Py2) protein is ATP synthase subunit alpha.